The primary structure comprises 294 residues: 4-hydroxy-tetrahydrodipicolinate synthase (294 aa).

A pyruvate-binding site is contributed by Thr-45. Catalysis depends on Tyr-133, which acts as the Proton donor/acceptor. Lys-161 acts as the Schiff-base intermediate with substrate in catalysis. Ile-203 provides a ligand contact to pyruvate.

It belongs to the DapA family. Homotetramer; dimer of dimers.

It is found in the cytoplasm. The catalysed reaction is L-aspartate 4-semialdehyde + pyruvate = (2S,4S)-4-hydroxy-2,3,4,5-tetrahydrodipicolinate + H2O + H(+). It functions in the pathway amino-acid biosynthesis; L-lysine biosynthesis via DAP pathway; (S)-tetrahydrodipicolinate from L-aspartate: step 3/4. In terms of biological role, catalyzes the condensation of (S)-aspartate-beta-semialdehyde [(S)-ASA] and pyruvate to 4-hydroxy-tetrahydrodipicolinate (HTPA). The polypeptide is 4-hydroxy-tetrahydrodipicolinate synthase (Buchnera aphidicola subsp. Acyrthosiphon pisum (strain 5A)).